A 606-amino-acid polypeptide reads, in one-letter code: Ubiquitin carboxyl-terminal hydrolase 2 (606 aa).

The tract at residues 1 to 201 (MSQLSSTLKR…RSEYLADYLE (201 aa)) is necessary for interaction with MDM4. Disordered regions lie at residues 53 to 112 (PSPP…GGSG) and 207 to 228 (ASAP…LSPT). Over residues 90–100 (KRAESQTRGTE) the composition is skewed to basic and acidic residues. The USP domain maps to 268–600 (AGLRNLGNTC…DAYLLFYELA (333 aa)). The active-site Nucleophile is cysteine 277. Positions 404–504 (YLEREDSRIG…FPKILVLHLK (101 aa)) are necessary for interaction with MDM4. 4 residues coordinate Zn(2+): cysteine 426, cysteine 429, cysteine 477, and cysteine 480. Histidine 558 (proton acceptor) is an active-site residue.

The protein belongs to the peptidase C19 family. USP2 subfamily. As to quaternary structure, homooligomer. Found in trimeric complex with MDM2 and MDM4 and USP2. Interacts with CCND1; the interaction is direct and promotes its stabilization by antagonizing ubiquitin-dependent degradation. Interacts (via N-terminus and C-terminus) with MDM2. Interacts with MDM4 and PER1. Interacts with KCNQ1; counteracts the NEDD4L-specific down-regulation of I(Ks) and restores plasma membrane localization of KCNQ1.

It localises to the cytoplasm. Its subcellular location is the perinuclear region. The enzyme catalyses Thiol-dependent hydrolysis of ester, thioester, amide, peptide and isopeptide bonds formed by the C-terminal Gly of ubiquitin (a 76-residue protein attached to proteins as an intracellular targeting signal).. With respect to regulation, cleavage is inhibited by ubiquitin in a dosage-dependent manner. Cleavage is blocked by ubiquitin aldehyde. Hydrolase that deubiquitinates polyubiquitinated target proteins such as MDM2, MDM4 and CCND1. Possesses both ubiquitin-specific peptidase and isopeptidase activities. Deubiquitinates MDM2 without reversing MDM2-mediated p53/TP53 ubiquitination and thus indirectly promotes p53/TP53 degradation and limits p53 activity. Has no deubiquitinase activity against p53/TP53. Prevents MDM2-mediated degradation of MDM4. Plays a role in the G1/S cell-cycle progression in normal and cancer cells. Plays a role in the regulation of myogenic differentiation of embryonic muscle cells. Regulates the circadian clock by modulating its intrinsic circadian rhythm and its capacity to respond to external cues. Associates with clock proteins and deubiquitinates core clock component PER1 but does not affect its overall stability. Regulates the nucleocytoplasmic shuttling and nuclear retention of PER1 and its repressive role on the clock transcription factors CLOCK and BMAL1. The protein is Ubiquitin carboxyl-terminal hydrolase 2 (USP2) of Bos taurus (Bovine).